The chain runs to 256 residues: Beta-fibrinogenase-like (256 aa).

An N-terminal signal peptide occupies residues M1–A18. The propeptide occupies Q19 to L24. Residues V25–A247 enclose the Peptidase S1 domain. Disulfide bonds link C31–C161, C49–C65, C96–C254, C140–C208, C172–C187, and C198–C223. A glycan (N-linked (GlcNAc...) asparagine) is linked at N44. The active-site Charge relay system is the H64. N78 and N101 each carry an N-linked (GlcNAc...) asparagine glycan. The active-site Charge relay system is D108. N-linked (GlcNAc...) asparagine glycosylation occurs at N152. Catalysis depends on S202, which acts as the Charge relay system.

Belongs to the peptidase S1 family. Snake venom subfamily. Monomer. In terms of tissue distribution, expressed by the venom gland.

The protein localises to the secreted. Snake venom serine protease that has fibrinogenolytic activities by hydrolyzing the beta chain of fibrinogen (FGB). Typical arginine esterase which hydrolyzes esters and amides of arginine. This is Beta-fibrinogenase-like from Daboia siamensis (Eastern Russel's viper).